Here is a 258-residue protein sequence, read N- to C-terminus: uncharacterized protein (258 aa).

The signal sequence occupies residues 1 to 20 (MKCFQKLYIFILILIVLMAG). The N-palmitoyl cysteine moiety is linked to residue Cys21. Residue Cys21 is the site of S-diacylglycerol cysteine attachment.

It belongs to the staphylococcal tandem lipoprotein family.

It is found in the cell membrane. This is an uncharacterized protein from Staphylococcus aureus (strain COL).